The following is a 241-amino-acid chain: Ribonuclease PH (241 aa).

Phosphate-binding positions include Arg89 and 127-129 (GTR).

Belongs to the RNase PH family. In terms of assembly, homohexameric ring arranged as a trimer of dimers.

The enzyme catalyses tRNA(n+1) + phosphate = tRNA(n) + a ribonucleoside 5'-diphosphate. In terms of biological role, phosphorolytic 3'-5' exoribonuclease that plays an important role in tRNA 3'-end maturation. Removes nucleotide residues following the 3'-CCA terminus of tRNAs; can also add nucleotides to the ends of RNA molecules by using nucleoside diphosphates as substrates, but this may not be physiologically important. Probably plays a role in initiation of 16S rRNA degradation (leading to ribosome degradation) during starvation. In Xylella fastidiosa (strain 9a5c), this protein is Ribonuclease PH.